A 445-amino-acid chain; its full sequence is Phosphoglucosamine mutase (445 aa).

Serine 104 functions as the Phosphoserine intermediate in the catalytic mechanism. Serine 104, aspartate 243, aspartate 245, and aspartate 247 together coordinate Mg(2+). The residue at position 104 (serine 104) is a Phosphoserine.

The protein belongs to the phosphohexose mutase family. The cofactor is Mg(2+). Activated by phosphorylation.

The enzyme catalyses alpha-D-glucosamine 1-phosphate = D-glucosamine 6-phosphate. In terms of biological role, catalyzes the conversion of glucosamine-6-phosphate to glucosamine-1-phosphate. This Neisseria subflava protein is Phosphoglucosamine mutase.